The chain runs to 232 residues: ATP-dependent dethiobiotin synthetase BioD (232 aa).

16-21 is a binding site for ATP; sequence GVGKTV. T20 serves as a coordination point for Mg(2+). Residue K41 is part of the active site. Residue T45 coordinates substrate. ATP-binding positions include D52, 111–114, 171–172, 200–202, and E207; these read EGIG, NQ, and PLS. Mg(2+)-binding residues include D52 and E111.

Belongs to the dethiobiotin synthetase family. Homodimer. The cofactor is Mg(2+).

It localises to the cytoplasm. It catalyses the reaction (7R,8S)-7,8-diammoniononanoate + CO2 + ATP = (4R,5S)-dethiobiotin + ADP + phosphate + 3 H(+). It carries out the reaction (7R,8S)-8-amino-7-(carboxyamino)nonanoate + ATP = (4R,5S)-dethiobiotin + ADP + phosphate + H(+). It functions in the pathway cofactor biosynthesis; biotin biosynthesis; biotin from 7,8-diaminononanoate: step 1/2. In terms of biological role, catalyzes a mechanistically unusual reaction, the ATP-dependent insertion of CO2 between the N7 and N8 nitrogen atoms of 7,8-diaminopelargonic acid (DAPA, also called 7,8-diammoniononanoate) to form a ureido ring. This archaea does not encode bioA (which catalyzes the formation of the precursor for this reaction in the cannonical pathway), instead it encodes bioU, which replaces bioA and also performs the first half of the cannonical BioD reaction. Thus in this archaea BioD has a different substrate. This Haloferax mediterranei (strain ATCC 33500 / DSM 1411 / JCM 8866 / NBRC 14739 / NCIMB 2177 / R-4) (Halobacterium mediterranei) protein is ATP-dependent dethiobiotin synthetase BioD.